A 316-amino-acid chain; its full sequence is Transaldolase (316 aa).

Lys-132 serves as the catalytic Schiff-base intermediate with substrate.

It belongs to the transaldolase family. Type 1 subfamily. As to quaternary structure, homodimer.

Its subcellular location is the cytoplasm. It carries out the reaction D-sedoheptulose 7-phosphate + D-glyceraldehyde 3-phosphate = D-erythrose 4-phosphate + beta-D-fructose 6-phosphate. It functions in the pathway carbohydrate degradation; pentose phosphate pathway; D-glyceraldehyde 3-phosphate and beta-D-fructose 6-phosphate from D-ribose 5-phosphate and D-xylulose 5-phosphate (non-oxidative stage): step 2/3. In terms of biological role, transaldolase is important for the balance of metabolites in the pentose-phosphate pathway. The chain is Transaldolase from Vibrio campbellii (strain ATCC BAA-1116).